A 1290-amino-acid chain; its full sequence is MTAIDVPWLSTPRRDNSHGTRSNSSCQPSCTQRIAVPISPDAVKYPLAVFCFAWAVTLGAYLDSQELVIGFAFHGWDGDTSIPSAGTCRIRIRPEQEILPALDEVVADGDKGLRSWVAQGAGSETDIAIQRKEVGDSLHPAVHGDEKLSPEIIITPSGNQGPYHVQGRFDPHIVAPALAHMMLHQFAFAVQGIVRGQSSIASSQVKDLQAISPDGMAQLMRWNRQSAAEEDGACVQDLIQRTCQQQPHAMAVCAWDGSWSYQELDCQASHLASQLCDHGIEPEKFVGLLFEKSKWTTVAILAVLKAGGAFVLLDPTQPAAYLSAICTMTRTALLLCSSHNQRLAAELRQTTIQVPRDPYHGAMPTSDFRRQSSPAVQPHHTLYACFTSGSTGRPKGFIIDHVAFNSGLQTYAHATGLGCDSRVFQFASYSFAPSITDQLASLIVGASICVPAEEELQNDVEGSISQLQATWLKLTPSVARTLDPGRLPCVKTLILVGEEAQVSDVAAWQDHGITVLGLYGQSENAKGTMVSRKSSEDADPGNIGSPFCAVGWVVDPDDYHRLMPIGATGELLLESPCLCRGYIDNEDETKLAFVSKPSWLTQVRGQGTAQPLLRTGDIVRYNCVDGTFCLVGRKGNRVKLRGQRLELAQVEHHLRSCLSSTHPVLADVVQPANENGRDPMLVAFVPWADSQSAADATDGFFAPPTKDFQTQARAVLGRLRHLLPSFMVPSTLLAVRTIPRTGTGKIHRRRLQEAASMLSRKQLMAYISPFIPYRAPETELERKLQRACGRLLNIEADQISMQDNFFDLGGNSLTARQLVAVARAEGLQVSVAQIFQQPTLAGLAQTHRHPVRRAEVPRSSHDPDPFGRVRDDVRREGLPHIARGNIEDALPVLYTQMTTARDHCVDFFPLRVIGGQLDPEQLRLAWTRVIQAFPILRTVFPRFRGRFIQLVVRDIGDSNFYRVVEAPSGQTAEEWARALCTEAIQFRCPVDRPVAQLTLIQAAGSSALVLRLCHAQYDGSCLEHLVRSLMMAYHGRPLVVESDFQAYTRTCLRLRIPEVLDFWRRFLAGSSPTQLASSMTGDREAARKINRSFFRREVNSLAAPAGFTLATVVKAAWSWVLRNETRSEDVVFGQLVSCRGSVPLPHADTIIGPCMNIIPVRVGRDLLGAVQAQHAQTMEFDMIGMDEIVRHCTSWPAGTEPDSIIIHENFHVDWEVHDGGVTIQKIAAVFNQQPSSLTFLITIPTETGLIAVLMAPANMSSTHADRVLDLFCNTLTRLAWSPAAVLRRSE.

The disordered stretch occupies residues 1–27 (MTAIDVPWLSTPRRDNSHGTRSNSSCQ). The tract at residues 260 to 657 (SYQELDCQAS…AQVEHHLRSC (398 aa)) is adenylation. The Carrier domain occupies 775-851 (APETELERKL…GLAQTHRHPV (77 aa)). The residue at position 812 (S812) is an O-(pantetheine 4'-phosphoryl)serine. The segment at 846 to 870 (THRHPVRRAEVPRSSHDPDPFGRVR) is disordered. Over residues 852–870 (RRAEVPRSSHDPDPFGRVR) the composition is skewed to basic and acidic residues. The interval 914–1162 (GGQLDPEQLR…PCMNIIPVRV (249 aa)) is condensation.

It belongs to the NRP synthetase family.

Functionally, nonribosomal peptide synthesis (NRPS) is a key mechanism responsible for the biosynthesis of bioactive metabolites which are potentially contributing to organismal virulence. The protein is Nonribosomal peptide synthetase 6 (NRPS6) of Aspergillus fumigatus (strain ATCC MYA-4609 / CBS 101355 / FGSC A1100 / Af293) (Neosartorya fumigata).